The primary structure comprises 288 residues: MASRKLRDQIVIATKFTTDYKGYDVGKGKSANFCGNHKRSLHVSVRDSLRKLQTDWIDILYVHWWDYMSSIEEVMDSLHILVQQGKVLYLGVSDTPAWVVSAANYYATSHGKTPFSIYQGKWNVLNRDFERDIIPMARHFGMALAPWDVMGGGRFQSKKAVEERKKKGEGLRTFFGTSEQTDMEVKISEALLKVAEEHGTESVTAIAIAYVRSKAKHVFPLVGGRKIEHLKQNIEALSIKLTPEQIKYLESIVPFDVGFPTNFIGDDPAVTKKPSFLTEMSAKISFED.

It belongs to the aldo/keto reductase family. Aldo/keto reductase 2 subfamily.

The sequence is that of Putative aryl-alcohol dehydrogenase AAD10 (AAD10) from Saccharomyces cerevisiae (strain ATCC 204508 / S288c) (Baker's yeast).